A 525-amino-acid chain; its full sequence is NGFI-A-binding protein 2 (525 aa).

The segment at 1-22 (MHRAPSPTAEQPPGGGDSARRT) is disordered. Phosphoserine is present on serine 6. An NCD1 region spans residues 35–113 (ALPRTLGELQ…REWATNPGLF (79 aa)). Residues 135 to 237 (GTRKGSMSNG…GGTGGGPDRL (103 aa)) are disordered. A phosphoserine mark is found at serine 157, serine 159, serine 162, and serine 171. Over residues 212–234 (AGGGVPEGTGAGGLAAGGTGGGP) the composition is skewed to gly residues. An NCD2 region spans residues 267 to 356 (LLKLNKKLAR…SRQVARESTY (90 aa)). The necessary for nuclear localization stretch occupies residues 353-384 (ESTYLSSLKGSRLHPEELGGPPLKKLKQEVGE). A Glycyl lysine isopeptide (Lys-Gly) (interchain with G-Cter in SUMO1) cross-link involves residue lysine 379. A disordered region spans residues 380-416 (QEVGEQSHPEIQQPPPGPESYVPPYRPSLEEDSASLS). At serine 479 the chain carries Phosphoserine. Residues 502–525 (PGPHPALVEGRRSSVKVEAEASRQ) form a disordered region. Positions 510 to 525 (EGRRSSVKVEAEASRQ) are enriched in basic and acidic residues. Residue lysine 517 forms a Glycyl lysine isopeptide (Lys-Gly) (interchain with G-Cter in SUMO1); alternate linkage. A Glycyl lysine isopeptide (Lys-Gly) (interchain with G-Cter in SUMO2); alternate cross-link involves residue lysine 517.

It belongs to the NAB family. In terms of assembly, homomultimers may associate with EGR1 bound to DNA. In terms of processing, sumoylation by EGR2 represses EGR2 transcriptional activity in hindbrain. As to expression, widely expressed at low levels. Highly expressed in melanoma cell lines.

The protein resides in the nucleus. Acts as a transcriptional repressor for zinc finger transcription factors EGR1 and EGR2. Isoform 2 lacks repression ability. In Homo sapiens (Human), this protein is NGFI-A-binding protein 2 (NAB2).